Reading from the N-terminus, the 245-residue chain is Small ribosomal subunit protein uS3 (245 aa).

The KH type-2 domain occupies 21–92 (LNEFLTRELA…SVELYAEKVA (72 aa)). Residues 215–245 (EEILPTTPVSEQKGAKPEVPVMPQGAPVPTA) form a disordered region.

Belongs to the universal ribosomal protein uS3 family.

It localises to the cytoplasm. The protein localises to the nucleus. It is found in the nucleolus. Its subcellular location is the mitochondrion inner membrane. The protein resides in the cytoskeleton. It localises to the spindle. It catalyses the reaction 2'-deoxyribonucleotide-(2'-deoxyribose 5'-phosphate)-2'-deoxyribonucleotide-DNA = a 3'-end 2'-deoxyribonucleotide-(2,3-dehydro-2,3-deoxyribose 5'-phosphate)-DNA + a 5'-end 5'-phospho-2'-deoxyribonucleoside-DNA + H(+). Component of the small ribosomal subunit. The ribosome is a large ribonucleoprotein complex responsible for the synthesis of proteins in the cell. Has endonuclease activity and plays a role in repair of damaged DNA. Also involved in other processes including regulation of transcription, translation of its cognate mRNA, spindle formation and chromosome movement during mitosis, and apoptosis. The protein is Small ribosomal subunit protein uS3 (rps3) of Ictalurus punctatus (Channel catfish).